The primary structure comprises 686 residues: XK-related protein 5 (686 aa).

A run of 5 helical transmembrane segments spans residues 33–53, 205–225, 239–259, 265–285, and 297–317; these read LLWG…QALS, HFWV…WLVA, LFNL…WDSP, VTFY…ATDF, and IAGV…YYSL. 3 disordered regions span residues 340–362, 444–470, and 490–589; these read DKTE…ESSG, LQRK…NSSA, and FASD…VGLA. Composition is skewed to polar residues over residues 455-470 and 490-509; these read LPSS…NSSA and FASD…TQGE. Residues 523–536 show a composition bias toward gly residues; sequence QGKGTGGQQRGGEG. The segment covering 550 to 567 has biased composition (polar residues); sequence VATSSQQEGSPATLQTAH.

Belongs to the XK family.

The protein resides in the cell membrane. This chain is XK-related protein 5, found in Pan troglodytes (Chimpanzee).